A 505-amino-acid polypeptide reads, in one-letter code: Maturase K (505 aa).

Belongs to the intron maturase 2 family. MatK subfamily.

The protein localises to the plastid. Its subcellular location is the chloroplast. In terms of biological role, usually encoded in the trnK tRNA gene intron. Probably assists in splicing its own and other chloroplast group II introns. The protein is Maturase K of Portulacaria afra (Elephant's food).